Here is a 121-residue protein sequence, read N- to C-terminus: MTIEMLYSKIHRATVTDANLNYVGSITVDEELLEASMLRVGQKVEILNINNGERFSTYIILGERGKRDICLNGAAARKVHKGDKIIIVAYATYDEKELQNYKPRVVLVNDNNDIEEILESI.

Ser-25 (schiff-base intermediate with substrate; via pyruvic acid) is an active-site residue. Ser-25 is subject to Pyruvic acid (Ser). Thr-57 is a binding site for substrate. Tyr-58 acts as the Proton donor in catalysis. A substrate-binding site is contributed by 73–75 (GAA).

Belongs to the PanD family. In terms of assembly, heterooctamer of four alpha and four beta subunits. The cofactor is pyruvate. Is synthesized initially as an inactive proenzyme, which is activated by self-cleavage at a specific serine bond to produce a beta-subunit with a hydroxyl group at its C-terminus and an alpha-subunit with a pyruvoyl group at its N-terminus.

It is found in the cytoplasm. The catalysed reaction is L-aspartate + H(+) = beta-alanine + CO2. It functions in the pathway cofactor biosynthesis; (R)-pantothenate biosynthesis; beta-alanine from L-aspartate: step 1/1. Its function is as follows. Catalyzes the pyruvoyl-dependent decarboxylation of aspartate to produce beta-alanine. This chain is Aspartate 1-decarboxylase, found in Sulfurimonas denitrificans (strain ATCC 33889 / DSM 1251) (Thiomicrospira denitrificans (strain ATCC 33889 / DSM 1251)).